The primary structure comprises 253 residues: Complement C1q subcomponent subunit B (253 aa).

The first 25 residues, 1-25 (MKTQWSEILTPLLLLLLGLLHVSWA), serve as a signal peptide directing secretion. Glutamine 26 is modified (pyrrolidone carboxylic acid). One can recognise a Collagen-like domain in the interval 29 to 112 (CTGSPGIPGV…GPRGPKGGSG (84 aa)). Positions 29-114 (CTGSPGIPGV…RGPKGGSGDY (86 aa)) are disordered. 4-hydroxyproline occurs at positions 33, 36, 39, 51, and 54. 5-hydroxylysine is present on residues lysine 57 and lysine 60. Proline 63 is modified (4-hydroxyproline). Over residues 68 to 77 (DHGELGEKGD) the composition is skewed to basic and acidic residues. 5-hydroxylysine is present on lysine 75. Over residues 78–96 (AGIPGIPGKVGPKGPVGPK) the composition is skewed to low complexity. 4-hydroxyproline occurs at positions 81 and 84. Lysine 90 and lysine 96 each carry 5-hydroxylysine. Residues proline 99 and proline 102 each carry the 4-hydroxyproline modification. Lysine 108 bears the 5-hydroxylysine mark. Residues 115–253 (KATQKVAFSA…GFLLFPDMDV (139 aa)) enclose the C1q domain. A disulfide bond links cysteine 179 and cysteine 198. Ca(2+)-binding residues include aspartate 199, tyrosine 200, and glutamine 206.

Core component of the complement C1 complex, a calcium-dependent complex composed of 1 molecule of the C1Q subcomplex, 2 molecules of C1R and 2 molecules of C1S. The C1Q subcomplex is composed 18 subunits: 3 chains of C1QA, C1QB, and C1QC trimerize to form 6 collagen-like triple helices connected to six globular ligand-recognition modules (C1q domain). In terms of processing, hydroxylated on lysine and proline residues. Hydroxylated lysine residues can be glycosylated. Human C1Q contains up to 68.3 hydroxylysine-galactosylglucose residues and up to 2.5 hydroxylysine-galactose per molecule. Total percentage hydroxylysine residues glycosylated is 86.4%. In terms of tissue distribution, highest levels in spleen, lung and brain. Weaker expression in kidney and liver. In the spleen, localized mainly to the red pulp, in cells mainly of monocyte-macrophage lineage. In white pulp, localized in specific dendritic cells such as those from the periarteriolar lymphatic sheath (PALS).

It localises to the secreted. Its subcellular location is the cell surface. The C1Q subcomplex is inhibited by sulfated molecules, such as triterpenoid sulfates, heparan sulfate, or chondroitin sulfates. Functionally, core component of the complement C1 complex, a multiprotein complex that initiates the classical pathway of the complement system, a cascade of proteins that leads to phagocytosis and breakdown of pathogens and signaling that strengthens the adaptive immune system. The classical complement pathway is initiated by the C1Q subcomplex of the C1 complex, which specifically binds IgG or IgM immunoglobulins complexed with antigens, forming antigen-antibody complexes on the surface of pathogens: C1QA, together with C1QB and C1QC, specifically recognizes and binds the Fc regions of IgG or IgM via its C1q domain. Immunoglobulin-binding activates the proenzyme C1R, which cleaves C1S, initiating the proteolytic cascade of the complement system. The C1Q subcomplex is activated by a hexamer of IgG complexed with antigens, while it is activated by a pentameric IgM. The C1Q subcomplex also recognizes and binds phosphatidylserine exposed on the surface of cells undergoing programmed cell death, possibly promoting activation of the complement system. This Rattus norvegicus (Rat) protein is Complement C1q subcomponent subunit B.